We begin with the raw amino-acid sequence, 359 residues long: Glycerol-3-phosphate dehydrogenase [NAD(P)+] (359 aa).

The NADPH site is built by threonine 11, tryptophan 12, arginine 32, and lysine 107. Sn-glycerol 3-phosphate-binding residues include lysine 107 and glycine 138. Position 142 (alanine 142) interacts with NADPH. Sn-glycerol 3-phosphate contacts are provided by lysine 193, aspartate 246, serine 256, arginine 257, and asparagine 258. Lysine 193 functions as the Proton acceptor in the catalytic mechanism. Residue arginine 257 participates in NADPH binding. The NADPH site is built by valine 281 and glutamate 283.

This sequence belongs to the NAD-dependent glycerol-3-phosphate dehydrogenase family.

The protein resides in the cytoplasm. It catalyses the reaction sn-glycerol 3-phosphate + NAD(+) = dihydroxyacetone phosphate + NADH + H(+). The enzyme catalyses sn-glycerol 3-phosphate + NADP(+) = dihydroxyacetone phosphate + NADPH + H(+). The protein operates within membrane lipid metabolism; glycerophospholipid metabolism. Catalyzes the reduction of the glycolytic intermediate dihydroxyacetone phosphate (DHAP) to sn-glycerol 3-phosphate (G3P), the key precursor for phospholipid synthesis. This chain is Glycerol-3-phosphate dehydrogenase [NAD(P)+], found in Dehalococcoides mccartyi (strain CBDB1).